Reading from the N-terminus, the 153-residue chain is Ribosome maturation factor RimP (153 aa).

It belongs to the RimP family.

It localises to the cytoplasm. Required for maturation of 30S ribosomal subunits. The protein is Ribosome maturation factor RimP of Picosynechococcus sp. (strain ATCC 27264 / PCC 7002 / PR-6) (Agmenellum quadruplicatum).